The sequence spans 142 residues: Large ribosomal subunit protein uL11 (142 aa).

Belongs to the universal ribosomal protein uL11 family. As to quaternary structure, part of the ribosomal stalk of the 50S ribosomal subunit. Interacts with L10 and the large rRNA to form the base of the stalk. L10 forms an elongated spine to which L12 dimers bind in a sequential fashion forming a multimeric L10(L12)X complex. One or more lysine residues are methylated.

In terms of biological role, forms part of the ribosomal stalk which helps the ribosome interact with GTP-bound translation factors. The polypeptide is Large ribosomal subunit protein uL11 (Acinetobacter baylyi (strain ATCC 33305 / BD413 / ADP1)).